Here is a 460-residue protein sequence, read N- to C-terminus: Interleukin-1 receptor-associated kinase 4 (460 aa).

M1 carries the post-translational modification N-acetylmethionine. Positions 20 to 104 constitute a Death domain; the sequence is RKLSDFIDPQ…APASLLLPDA (85 aa). K34 bears the N6-acetyllysine mark. The Protein kinase domain maps to 186-454; it reads SVGGNKMGEG…PDIKKVQQLL (269 aa). ATP contacts are provided by residues 192-200 and K213; that span reads MGEGGFGVV. D311 acts as the Proton acceptor in catalysis. Residues 313–316 and D329 contribute to the ATP site; that span reads KSAN. Phosphothreonine is present on residues T342 and T345. S346 carries the phosphoserine modification.

The protein belongs to the protein kinase superfamily. TKL Ser/Thr protein kinase family. Pelle subfamily. In terms of assembly, associates with MYD88 and IRAK2 to form a ternary complex called the Myddosome. Once phosphorylated, IRAK4 dissociates from the receptor complex and then associates with the TNF receptor-associated factor 6 (TRAF6), IRAK1, and PELI1; this intermediate complex is required for subsequent NF-kappa-B activation. Direct binding of SMAD6 to PELI1 prevents complex formation and hence negatively regulates IL1R-TLR signaling and eventually NF-kappa-B-mediated gene expression. Interacts with IL1RL1. Interacts (when phosphorylated) with IRAK1. May interact (when phosphorylated) with IRAK3. Mg(2+) is required as a cofactor. Post-translationally, phosphorylated.

The protein localises to the cytoplasm. It carries out the reaction L-seryl-[protein] + ATP = O-phospho-L-seryl-[protein] + ADP + H(+). It catalyses the reaction L-threonyl-[protein] + ATP = O-phospho-L-threonyl-[protein] + ADP + H(+). Serine/threonine-protein kinase that plays a critical role in initiating innate immune response against foreign pathogens. Involved in Toll-like receptor (TLR) and IL-1R signaling pathways. Is rapidly recruited by MYD88 to the receptor-signaling complex upon TLR activation to form the Myddosome together with IRAK2. Phosphorylates initially IRAK1, thus stimulating the kinase activity and intensive autophosphorylation of IRAK1. Phosphorylates E3 ubiquitin ligases Pellino proteins (PELI1, PELI2 and PELI3) to promote pellino-mediated polyubiquitination of IRAK1. Then, the ubiquitin-binding domain of IKBKG/NEMO binds to polyubiquitinated IRAK1 bringing together the IRAK1-MAP3K7/TAK1-TRAF6 complex and the NEMO-IKKA-IKKB complex. In turn, MAP3K7/TAK1 activates IKKs (CHUK/IKKA and IKBKB/IKKB) leading to NF-kappa-B nuclear translocation and activation. Alternatively, phosphorylates TIRAP to promote its ubiquitination and subsequent degradation. Phosphorylates NCF1 and regulates NADPH oxidase activation after LPS stimulation suggesting a similar mechanism during microbial infections. This Homo sapiens (Human) protein is Interleukin-1 receptor-associated kinase 4 (IRAK4).